A 231-amino-acid polypeptide reads, in one-letter code: MGQKVNPKGLRIGIIRDWEGKWYADKRNYAALLHEDIKIRKFIKEKLFAAGISRIQIERAANRVKVSIHTAKPGIVIGRGGAEVENLRKQLENLTGKQVSVNIVEIKVPELDAQLVAENVAAQLEKRIAFRRAMKQVVSRSMKMGAKGIKVACGGRLAGAEIARTEWYSEGKVPLHTLRADIDYGFAEANTTYGKIGVKVWIYRGEVLPEAKTPAKTAARGGKEAPGEGGE.

The region spanning 39–107 (IRKFIKEKLF…QVSVNIVEIK (69 aa)) is the KH type-2 domain.

It belongs to the universal ribosomal protein uS3 family. In terms of assembly, part of the 30S ribosomal subunit. Forms a tight complex with proteins S10 and S14.

Functionally, binds the lower part of the 30S subunit head. Binds mRNA in the 70S ribosome, positioning it for translation. This is Small ribosomal subunit protein uS3 from Pelotomaculum thermopropionicum (strain DSM 13744 / JCM 10971 / SI).